Reading from the N-terminus, the 447-residue chain is RNA-binding protein 208 (447 aa).

RRM domains lie at Arg-73–Ala-147 and Phe-158–Lys-236. A compositionally biased stretch (polar residues) spans Thr-254–Thr-269. 2 disordered regions span residues Thr-254–Pro-279 and Trp-353–Pro-372. Residues Thr-282–Lys-356 enclose the RRM 3 domain.

In terms of assembly, interacts with RBP-P.

In terms of biological role, RNA-binding protein. The sequence is that of RNA-binding protein 208 from Oryza sativa subsp. japonica (Rice).